The primary structure comprises 359 residues: WAT1-related protein At4g16620 (359 aa).

10 helical membrane-spanning segments follow: residues E5–G25, L41–L61, I77–G97, M105–G125, T143–L163, I183–Q203, I206–I226, V246–G266, P279–F299, and F305–W325. The EamA 1 domain occupies L30–S154. An EamA 2 domain is found at I206 to L324.

It belongs to the drug/metabolite transporter (DMT) superfamily. Plant drug/metabolite exporter (P-DME) (TC 2.A.7.4) family.

The protein resides in the membrane. This is WAT1-related protein At4g16620 from Arabidopsis thaliana (Mouse-ear cress).